The following is a 380-amino-acid chain: WAT1-related protein At2g37460 (380 aa).

10 helical membrane-spanning segments follow: residues 16–36, 45–65, 71–91, 107–127, 142–162, 187–207, 216–236, 254–274, 282–302, and 306–326; these read FISM…SKAV, VLVV…AFYF, PKMT…EPVI, FATA…YIFG, VVGT…KGPV, GAVL…LQAI, LSLT…VALV, LTAT…GGVV, FVTA…TIIF, and MYLG…LVIW. Residues 27–134 form the EamA 1 domain; the sequence is AGMDILSKAV…IFGLERVKLR (108 aa). The EamA 2 domain maps to 196-325; sequence FSYACFMILQ…VICAGLYLVI (130 aa).

Belongs to the drug/metabolite transporter (DMT) superfamily. Plant drug/metabolite exporter (P-DME) (TC 2.A.7.4) family.

It localises to the membrane. The polypeptide is WAT1-related protein At2g37460 (Arabidopsis thaliana (Mouse-ear cress)).